The chain runs to 1216 residues: Coatomer subunit alpha-1 (1216 aa).

8 WD repeats span residues 7 to 48, 49 to 88, 91 to 132, 133 to 172, 202 to 241, 246 to 285, 288 to 326, and 363 to 404; these read TKSN…DRFD, EHEG…CLFT, GHLD…SVLT, GHNH…KKTV, GHDR…AWEV, GHMN…GLQT, REHD…PAFA, and SLNQ…VGRS.

In terms of assembly, oligomeric complex that consists of at least the alpha, beta, beta', gamma, delta, epsilon and zeta subunits.

Its subcellular location is the cytoplasm. The protein resides in the golgi apparatus membrane. It localises to the cytoplasmic vesicle. The protein localises to the COPI-coated vesicle membrane. In terms of biological role, the coatomer is a cytosolic protein complex that binds to dilysine motifs and reversibly associates with Golgi non-clathrin-coated vesicles, which further mediate biosynthetic protein transport from the ER, via the Golgi up to the trans Golgi network. Coatomer complex is required for budding from Golgi membranes, and is essential for the retrograde Golgi-to-ER transport of dilysine-tagged proteins. This Arabidopsis thaliana (Mouse-ear cress) protein is Coatomer subunit alpha-1.